A 628-amino-acid chain; its full sequence is Kinesin-like protein subito (628 aa).

The tract at residues Arg28–Ala68 is disordered. Over residues Gln44–Glu58 the composition is skewed to acidic residues. Positions Gly87 to Ile479 constitute a Kinesin motor domain. Gly169 to Thr176 is an ATP binding site. Residues Asp509 to Ser612 adopt a coiled-coil conformation. Residues Lys596–Asp628 form a disordered region. Position 607 is a phosphoserine (Ser607). Position 609 is a phosphothreonine (Thr609). A Phosphoserine modification is found at Ser612.

Belongs to the TRAFAC class myosin-kinesin ATPase superfamily. Kinesin family.

The protein resides in the cytoplasm. It is found in the cytoskeleton. Its function is as follows. Required during female meiosis for bipolar spindle formation in the absence of the centrosomes and chromosome homolog segregation. Also has roles in male meiosis and mitotic divisions of the early embryo. This is Kinesin-like protein subito (sub) from Drosophila melanogaster (Fruit fly).